Consider the following 1992-residue polypeptide: E3 ubiquitin-protein ligase TRIP12 (1992 aa).

Residues 1–10 (MSNRPNNNPG) show a composition bias toward polar residues. A disordered region spans residues 1–398 (MSNRPNNNPG…SGESESDDSE (398 aa)). At serine 2 the chain carries N-acetylserine. Serine 12 is subject to Phosphoserine. A compositionally biased stretch (polar residues) spans 18–27 (RNTAGAQPQD). A compositionally biased stretch (low complexity) spans 29-43 (SIGGRSCSSSSVVIV). Positions 48–70 (DPDRANTSEKQKTGQVPKKDNSR) are enriched in basic and acidic residues. Phosphoserine is present on residues serine 77, serine 85, and serine 100. The segment covering 78–88 (PDYNRTNSPSS) has biased composition (polar residues). Residues 154 to 164 (SSCIKSASVSE) show a composition bias toward polar residues. Composition is skewed to low complexity over residues 175-188 (PTKL…SAKA) and 196-215 (SSSA…ASSA). Lysine 181 bears the N6-acetyllysine mark. Polar residues predominate over residues 280-290 (PGSSKSETSKP). 2 positions are modified to phosphoserine: serine 310 and serine 312. Positions 330 to 339 (GSCASASRRG) are enriched in low complexity. The span at 346 to 358 (GAAEARRQEKMAD) shows a compositional bias: basic and acidic residues. Polar residues predominate over residues 362 to 371 (NQETVNSSAA). In terms of domain architecture, WWE spans 749–836 (MLKKGNAQNT…DPELAKSFIK (88 aa)). The segment at 938 to 1044 (SLLTSPPKAC…QSPKSSFLAS (107 aa)) is disordered. A Phosphoserine modification is found at serine 942. The span at 948–960 (TNGSGSLGSTPSV) shows a compositional bias: polar residues. Over residues 961–973 (NSGTATAATNASA) the composition is skewed to low complexity. Phosphoserine is present on residues serine 991 and serine 997. Over residues 1001-1014 (KRKRLPKRGSRRPK) the composition is skewed to basic residues. Phosphoserine is present on serine 1016. Over residues 1017-1026 (PPRDDDKVDN) the composition is skewed to basic and acidic residues. Residues 1029–1040 (KSPTTTQSPKSS) show a composition bias toward low complexity. A phosphoserine mark is found at serine 1030, serine 1317, serine 1322, serine 1329, and serine 1376. Residue threonine 1377 is modified to Phosphothreonine. Disordered regions lie at residues 1407–1434 (SNKD…AKKH) and 1568–1587 (TNPE…PRLD). Lysine 1425 carries the post-translational modification N6-acetyllysine. Serine 1427 bears the Phosphoserine mark. Residues 1496–1570 (EIIPTSEFIN…AMQRLLDTNP (75 aa)) are K-box. The 108-residue stretch at 1885–1992 (PDHGYTHDSR…REGQQSFHLS (108 aa)) folds into the HECT domain. Residue cysteine 1959 is the Glycyl thioester intermediate of the active site.

Belongs to the UPL family. K-HECT subfamily. As to quaternary structure, interacts with MYC; leading to disrupt interaction with isoform p19ARF/ARF of CDKN2A. Interacts with TRADD; leading to disrupt interaction with isoform p19ARF/ARF of CDKN2A. Interacts with SMARCC1; leading to disrupt interaction with SMARCE1.

It localises to the nucleus. The protein localises to the nucleoplasm. It catalyses the reaction S-ubiquitinyl-[E2 ubiquitin-conjugating enzyme]-L-cysteine + [acceptor protein]-L-lysine = [E2 ubiquitin-conjugating enzyme]-L-cysteine + N(6)-ubiquitinyl-[acceptor protein]-L-lysine.. It participates in protein modification; protein ubiquitination. E3 ubiquitin-protein ligase involved in ubiquitin fusion degradation (UFD) pathway and regulation of DNA repair. Part of the ubiquitin fusion degradation (UFD) pathway, a process that mediates ubiquitination of protein at their N-terminus, regardless of the presence of lysine residues in target proteins. Acts as a key regulator of DNA damage response by acting as a suppressor of RNF168, an E3 ubiquitin-protein ligase that promotes accumulation of 'Lys-63'-linked histone H2A and H2AX at DNA damage sites, thereby acting as a guard against excessive spreading of ubiquitinated chromatin at damaged chromosomes. In normal cells, mediates ubiquitination and degradation of isoform p19ARF/ARF of CDKN2A, a lysine-less tumor suppressor required for p53/TP53 activation under oncogenic stress. In cancer cells, however, isoform p19ARF/ARF and TRIP12 are located in different cell compartments, preventing isoform p19ARF/ARF ubiquitination and degradation. Does not mediate ubiquitination of isoform p16-INK4a of CDKN2A. Also catalyzes ubiquitination of NAE1 and SMARCE1, leading to their degradation. Ubiquitination and degradation of target proteins is regulated by interaction with proteins such as MYC, TRADD or SMARCC1, which disrupt the interaction between TRIP12 and target proteins. Mediates ubiquitination of ASXL1: following binding to N(6)-methyladenosine methylated DNA, ASXL1 is ubiquitinated by TRIP12, leading to its degradation and subsequent inactivation of the PR-DUB complex. The sequence is that of E3 ubiquitin-protein ligase TRIP12 (TRIP12) from Bos taurus (Bovine).